Here is a 237-residue protein sequence, read N- to C-terminus: Uracil-DNA glycosylase (237 aa).

The active-site Proton acceptor is aspartate 77.

Belongs to the uracil-DNA glycosylase (UDG) superfamily. UNG family.

It localises to the cytoplasm. It catalyses the reaction Hydrolyzes single-stranded DNA or mismatched double-stranded DNA and polynucleotides, releasing free uracil.. In terms of biological role, excises uracil residues from the DNA which can arise as a result of misincorporation of dUMP residues by DNA polymerase or due to deamination of cytosine. The sequence is that of Uracil-DNA glycosylase from Acinetobacter baumannii (strain ACICU).